A 155-amino-acid chain; its full sequence is Cathelicidin-1 (155 aa).

The signal sequence occupies residues 1 to 29 (METPRASLSLGRWSLWLLLLGLALPSASA). Glutamine 30 bears the Pyrrolidone carboxylic acid mark. Residues 30 to 143 (QALSYREAVL…KQPWAPPQAA (114 aa)) constitute a propeptide that is removed on maturation. Disulfide bonds link cysteine 85–cysteine 96, cysteine 107–cysteine 124, and cysteine 146–cysteine 154.

It belongs to the cathelicidin family. As to expression, large granules of neutrophils.

It is found in the secreted. Its function is as follows. Potent microbicidal activity; active against S.aureus and E.coli. In Bos taurus (Bovine), this protein is Cathelicidin-1 (CATHL1).